We begin with the raw amino-acid sequence, 244 residues long: Uridylate kinase (244 aa).

Residue Lys-15–Gly-18 participates in ATP binding. The segment at Gly-23–Gly-28 is involved in allosteric activation by GTP. Gly-57 is a UMP binding site. 2 residues coordinate ATP: Gly-58 and Arg-62. UMP contacts are provided by residues Asp-77 and Thr-138–Thr-145. 3 residues coordinate ATP: Thr-165, Phe-171, and Asp-174.

This sequence belongs to the UMP kinase family. In terms of assembly, homohexamer.

Its subcellular location is the cytoplasm. The enzyme catalyses UMP + ATP = UDP + ADP. It participates in pyrimidine metabolism; CTP biosynthesis via de novo pathway; UDP from UMP (UMPK route): step 1/1. Its activity is regulated as follows. Allosterically activated by GTP. Inhibited by UTP. Its function is as follows. Catalyzes the reversible phosphorylation of UMP to UDP. This chain is Uridylate kinase, found in Aeromonas hydrophila subsp. hydrophila (strain ATCC 7966 / DSM 30187 / BCRC 13018 / CCUG 14551 / JCM 1027 / KCTC 2358 / NCIMB 9240 / NCTC 8049).